The primary structure comprises 461 residues: Polycomb group protein FIE1 (461 aa).

The segment covering Met-1–Ser-11 has biased composition (basic residues). The segment at Met-1 to Pro-56 is disordered. Over residues Thr-18 to Gly-37 the composition is skewed to polar residues. Positions Lys-38–Pro-47 are enriched in basic and acidic residues. WD repeat units follow at residues Asp-143–Ser-186, Gly-189–Val-229, Gly-235–Glu-275, Val-301–Gly-338, Pro-351–Ile-391, and Glu-398–Ser-437. A disordered region spans residues Glu-429–Ala-461. Residues Pro-432–Gly-448 show a composition bias toward low complexity.

This sequence belongs to the WD repeat ESC family. Specifically expressed in kernel starting from 6 days after pollination.

The protein resides in the nucleus. Polycomb group (PcG) protein. PcG proteins act by forming multiprotein complexes, which are required to maintain the transcriptionally repressive state of homeotic genes throughout development. PcG proteins are not required to initiate repression, but to maintain it during later stages of development. They probably act via the methylation of histones, rendering chromatin heritably changed in its expressibility. The polypeptide is Polycomb group protein FIE1 (FIE1) (Zea mays (Maize)).